We begin with the raw amino-acid sequence, 234 residues long: Protein spitz (234 aa).

An N-terminal signal peptide occupies residues 1-28 (MHSTMSVQHGLVALVLIGCLAHPWHVEA). Topologically, residues 29–143 (CSSRTVPKPR…RPRPMLEKAS (115 aa)) are lumenal. The segment at 33-71 (TVPKPRSSISSSMSGTALPPTQAPVTSSTTMRTTTTTTP) is disordered. The span at 56–71 (PVTSSTTMRTTTTTTP) shows a compositional bias: low complexity. Residue asparagine 74 is glycosylated (N-linked (GlcNAc...) asparagine). The region spanning 78–122 (PTYKCPETFDAWYCLNDAHCFAVKIADLPVYSCECAIGFMGQRCE) is the EGF-like domain. 3 cysteine pairs are disulfide-bonded: cysteine 82-cysteine 97, cysteine 91-cysteine 110, and cysteine 112-cysteine 121. Residues 144-164 (IASGAMCALVFMLFVCLAFYL) form a helical membrane-spanning segment. The Cytoplasmic segment spans residues 165–234 (RFEQRAAKKA…SFAIRRSNKL (70 aa)).

Interacts with Star via the lumenal domain. Proteolytic processing by Rhomboid occurs in the Golgi. Cleavage takes place within the transmembrane domain close to residue 144 and the active growth factor is released. Post-translationally, N-glycosylated and O-glycosylated. As to expression, expressed throughout the embryo.

The protein resides in the cell membrane. The protein localises to the endoplasmic reticulum membrane. It localises to the golgi apparatus membrane. In terms of biological role, ligand for the EGF receptor (Gurken). Involved in a number of unrelated developmental choices, for example, dorsal-ventral axis formation, glial migration, sensory organ determination, and muscle development. It is required for photoreceptor determination. In Drosophila melanogaster (Fruit fly), this protein is Protein spitz (spi).